The primary structure comprises 264 residues: Thymidylate synthase (264 aa).

A dUMP-binding site is contributed by arginine 21. Histidine 51 lines the (6R)-5,10-methylene-5,6,7,8-tetrahydrofolate pocket. DUMP is bound at residue 126–127 (RR). Cysteine 146 functions as the Nucleophile in the catalytic mechanism. Residues 166–169 (RSAD), asparagine 177, and 207–209 (HIY) each bind dUMP. Aspartate 169 serves as a coordination point for (6R)-5,10-methylene-5,6,7,8-tetrahydrofolate. Alanine 263 serves as a coordination point for (6R)-5,10-methylene-5,6,7,8-tetrahydrofolate.

It belongs to the thymidylate synthase family. Bacterial-type ThyA subfamily. Homodimer.

It is found in the cytoplasm. It catalyses the reaction dUMP + (6R)-5,10-methylene-5,6,7,8-tetrahydrofolate = 7,8-dihydrofolate + dTMP. The protein operates within pyrimidine metabolism; dTTP biosynthesis. Its function is as follows. Catalyzes the reductive methylation of 2'-deoxyuridine-5'-monophosphate (dUMP) to 2'-deoxythymidine-5'-monophosphate (dTMP) while utilizing 5,10-methylenetetrahydrofolate (mTHF) as the methyl donor and reductant in the reaction, yielding dihydrofolate (DHF) as a by-product. This enzymatic reaction provides an intracellular de novo source of dTMP, an essential precursor for DNA biosynthesis. This chain is Thymidylate synthase, found in Methylobacillus flagellatus (strain ATCC 51484 / DSM 6875 / VKM B-1610 / KT).